The primary structure comprises 377 residues: UDP-N-acetylglucosamine 2-epimerase (377 aa).

Histidine 212 is a catalytic residue.

Belongs to the UDP-N-acetylglucosamine 2-epimerase family. In terms of assembly, homodimer.

It carries out the reaction UDP-N-acetyl-alpha-D-glucosamine + H2O = aldehydo-N-acetyl-D-mannosamine + UDP + H(+). Functionally, catalyzes the conversion of UDP-N-acetylglucosamine (UDP-GlcNAc) to UDP and N-acetyl-D-mannosamine (ManNAc). The polypeptide is UDP-N-acetylglucosamine 2-epimerase (siaA) (Neisseria meningitidis serogroup B (strain ATCC BAA-335 / MC58)).